The primary structure comprises 441 residues: Arginine biosynthesis bifunctional protein ArgJ, mitochondrial (441 aa).

The N-terminal 8 residues, 1–8, are a transit peptide targeting the mitochondrion; it reads MRISSTLL. Substrate contacts are provided by T177, K204, T215, E301, N436, and S441. T215 (nucleophile) is an active-site residue.

The protein belongs to the ArgJ family. As to quaternary structure, heterodimer of an alpha and a beta chain. The alpha and beta chains are autoproteolytically processed from a single precursor protein within the mitochondrion.

The protein localises to the mitochondrion matrix. It catalyses the reaction N(2)-acetyl-L-ornithine + L-glutamate = N-acetyl-L-glutamate + L-ornithine. It carries out the reaction L-glutamate + acetyl-CoA = N-acetyl-L-glutamate + CoA + H(+). It participates in amino-acid biosynthesis; L-arginine biosynthesis; L-ornithine and N-acetyl-L-glutamate from L-glutamate and N(2)-acetyl-L-ornithine (cyclic): step 1/1. The protein operates within amino-acid biosynthesis; L-arginine biosynthesis; N(2)-acetyl-L-ornithine from L-glutamate: step 1/4. Its activity is regulated as follows. Inhibited by ornithine. Catalyzes two activities which are involved in the cyclic version of arginine biosynthesis: the synthesis of acetylglutamate from glutamate and acetyl-CoA, and of ornithine by transacetylation between acetylornithine and glutamate. This Saccharomyces cerevisiae (strain ATCC 204508 / S288c) (Baker's yeast) protein is Arginine biosynthesis bifunctional protein ArgJ, mitochondrial.